We begin with the raw amino-acid sequence, 293 residues long: Ribosomal protein L11 methyltransferase (293 aa).

Positions 145, 166, 188, and 230 each coordinate S-adenosyl-L-methionine.

This sequence belongs to the methyltransferase superfamily. PrmA family.

The protein localises to the cytoplasm. The enzyme catalyses L-lysyl-[protein] + 3 S-adenosyl-L-methionine = N(6),N(6),N(6)-trimethyl-L-lysyl-[protein] + 3 S-adenosyl-L-homocysteine + 3 H(+). In terms of biological role, methylates ribosomal protein L11. This chain is Ribosomal protein L11 methyltransferase, found in Erwinia tasmaniensis (strain DSM 17950 / CFBP 7177 / CIP 109463 / NCPPB 4357 / Et1/99).